A 133-amino-acid polypeptide reads, in one-letter code: Aspartate 1-decarboxylase (133 aa).

The Schiff-base intermediate with substrate; via pyruvic acid role is filled by S26. S26 carries the post-translational modification Pyruvic acid (Ser). A substrate-binding site is contributed by T58. Y59 (proton donor) is an active-site residue. Residue 74 to 76 (GAA) participates in substrate binding.

It belongs to the PanD family. Heterooctamer of four alpha and four beta subunits. The cofactor is pyruvate. Post-translationally, is synthesized initially as an inactive proenzyme, which is activated by self-cleavage at a specific serine bond to produce a beta-subunit with a hydroxyl group at its C-terminus and an alpha-subunit with a pyruvoyl group at its N-terminus.

It is found in the cytoplasm. It carries out the reaction L-aspartate + H(+) = beta-alanine + CO2. Its pathway is cofactor biosynthesis; (R)-pantothenate biosynthesis; beta-alanine from L-aspartate: step 1/1. Catalyzes the pyruvoyl-dependent decarboxylation of aspartate to produce beta-alanine. The protein is Aspartate 1-decarboxylase of Legionella pneumophila subsp. pneumophila (strain Philadelphia 1 / ATCC 33152 / DSM 7513).